The chain runs to 96 residues: Mapk-regulated corepressor-interacting protein 1 (96 aa).

Disordered stretches follow at residues Met-1 to Ile-28 and Ala-76 to Ser-96. The short motif at Pro-79–Ser-83 is the PXDLS motif element. Over residues Asp-81–Ser-96 the composition is skewed to basic and acidic residues.

It belongs to the MCRIP family.

The protein resides in the nucleus. Its subcellular location is the cytoplasm. It localises to the stress granule. Its function is as follows. May play a role in the regulation of the epithelial-mesenchymal transition. In Gallus gallus (Chicken), this protein is Mapk-regulated corepressor-interacting protein 1 (MCRIP1).